Reading from the N-terminus, the 238-residue chain is Ribonuclease PH (238 aa).

Residues R86 and 124–126 (GTR) each bind phosphate.

It belongs to the RNase PH family. In terms of assembly, homohexameric ring arranged as a trimer of dimers.

It catalyses the reaction tRNA(n+1) + phosphate = tRNA(n) + a ribonucleoside 5'-diphosphate. Phosphorolytic 3'-5' exoribonuclease that plays an important role in tRNA 3'-end maturation. Removes nucleotide residues following the 3'-CCA terminus of tRNAs; can also add nucleotides to the ends of RNA molecules by using nucleoside diphosphates as substrates, but this may not be physiologically important. Probably plays a role in initiation of 16S rRNA degradation (leading to ribosome degradation) during starvation. The sequence is that of Ribonuclease PH from Escherichia coli O6:K15:H31 (strain 536 / UPEC).